The following is a 443-amino-acid chain: Transcriptional adapter 2-alpha (443 aa).

A Phosphoserine; in variant Ser-6 modification is found at Pro-6. The ZZ-type zinc-finger motif lies at 12–69; it reads SDKPPCRGCSSYLMEPYIKCAECGPPPFFLCLQCFTRGFEYKKHQSDHTYEIMTSDFP. Zn(2+)-binding residues include Cys-17, Cys-20, Cys-31, Cys-34, Cys-42, Cys-45, His-55, and His-59. Residues 70–122 enclose the SANT domain; it reads VLDPSWTAQEEMALLEAVMDCGFGNWQDVANQMCTKTKEECEKHYMKHFINNP. Residues Lys-132 and Lys-138 each participate in a glycyl lysine isopeptide (Lys-Gly) (interchain with G-Cter in SUMO2) cross-link. Positions 348 to 372 are disordered; the sequence is SPSIPMASNSGRRSAPPLNLTGLPG. Positions 356 to 443 constitute an SWIRM domain; the sequence is NSGRRSAPPL…LIREGYITKG (88 aa). Residues 426 to 435 mediate DNA binding; that stretch reads KTRKIYDFLI.

As to quaternary structure, interacts with GCN5 and NR3C1. Associated with the P/CAF protein in the PCAF complex. Component of the PCAF complex, at least composed of TADA2L/ADA2, TADA3L/ADA3, TAF5L/PAF65-beta, TAF6L/PAF65-alpha, TAF10/TAFII30, TAF12/TAFII20, TAF9/TAFII31 and TRRAP. Component of the ADA2A-containing complex (ATAC), composed of KAT14, KAT2A, TADA2L, TADA3L, ZZ3, MBIP, WDR5, YEATS2, CCDC101 and DR1. Interacts with CCDC134. Expressed in all tissues, but most abundantly in testis.

It localises to the nucleus. Its subcellular location is the chromosome. Component of the ATAC complex, a complex with histone acetyltransferase activity on histones H3 and H4. Required for the function of some acidic activation domains, which activate transcription from a distant site. Binds double-stranded DNA. Binds dinucleosomes, probably at the linker region between neighboring nucleosomes. Plays a role in chromatin remodeling. May promote TP53/p53 'Lys-321' acetylation, leading to reduced TP53 stability and transcriptional activity. May also promote XRCC6 acetylation thus facilitating cell apoptosis in response to DNA damage. In Homo sapiens (Human), this protein is Transcriptional adapter 2-alpha (TADA2A).